The chain runs to 419 residues: Protein farnesyltransferase subunit beta (419 aa).

PFTB repeat units lie at residues 68–109 (EDNT…ITLG), 119–160 (RNKL…SVLN), 167–208 (IKNV…ILIG), 215–256 (LPRL…ALLQ), and 329–371 (SIAL…SLCQ). (2E,6E)-farnesyl diphosphate contacts are provided by residues 193–196 (HGGY) and 235–238 (RTNK). Zn(2+) is bound by residues Asp241 and Cys243. 244–247 (YSFW) contributes to the (2E,6E)-farnesyl diphosphate binding site. Position 359 (His359) interacts with Zn(2+).

This sequence belongs to the protein prenyltransferase subunit beta family. In terms of assembly, heterodimer of FTA and FTB. It depends on Zn(2+) as a cofactor.

It carries out the reaction L-cysteinyl-[protein] + (2E,6E)-farnesyl diphosphate = S-(2E,6E)-farnesyl-L-cysteinyl-[protein] + diphosphate. Functionally, catalyzes the transfer of a farnesyl moiety from farnesyl diphosphate to a cysteine at the fourth position from the C-terminus of several proteins. The beta subunit FTB is responsible for peptide-binding. The chain is Protein farnesyltransferase subunit beta (FTB) from Pisum sativum (Garden pea).